Here is a 399-residue protein sequence, read N- to C-terminus: MNIHEHQAKAVLAEFGVAVPRGYPAFSVDEAVQAAEKLGGPVFVVKSQIHAGGRGKGRFEGLGPDAKGGVRVVKSVDEVKANAEEMLGRVLVTHQTGAAGKQVNRLYIEEGAQIAKEFYLSLLVDRETSWVSVVASTEGGMDIEEVAHATPEKIVTFSIDPATGVFPHHGRHLAKALGLTGGLAKEAATLLNQLYAAFLAKDMSMLEINPLIVTGDDHLRVLDAKVSFDSNALFRHADVVALRDESEEDPKEIEASKYDLSYIALDGEIGCMVNGAGLAMATMDIIKLYGAEPANFLDVGGGASKEKVTAAFKIITADPNVKGILVNIFGGIMRCDIIAEGVVAAVKEVGLKVPLVVRLEGTNVDLGKKIINESGLNVIAANDLSDGAEKIVKAVRGAA.

Residues 9–254 (KAVLAEFGVA…ESEEDPKEIE (246 aa)) enclose the ATP-grasp domain. ATP-binding positions include K46, 53–55 (GRG), E109, A112, and E117. N209 and D223 together coordinate Mg(2+). Residues N274 and 331–333 (GIM) each bind substrate.

It belongs to the succinate/malate CoA ligase beta subunit family. In terms of assembly, heterotetramer of two alpha and two beta subunits. The cofactor is Mg(2+).

The enzyme catalyses succinate + ATP + CoA = succinyl-CoA + ADP + phosphate. The catalysed reaction is GTP + succinate + CoA = succinyl-CoA + GDP + phosphate. It participates in carbohydrate metabolism; tricarboxylic acid cycle; succinate from succinyl-CoA (ligase route): step 1/1. Its function is as follows. Succinyl-CoA synthetase functions in the citric acid cycle (TCA), coupling the hydrolysis of succinyl-CoA to the synthesis of either ATP or GTP and thus represents the only step of substrate-level phosphorylation in the TCA. The beta subunit provides nucleotide specificity of the enzyme and binds the substrate succinate, while the binding sites for coenzyme A and phosphate are found in the alpha subunit. This is Succinate--CoA ligase [ADP-forming] subunit beta from Phenylobacterium zucineum (strain HLK1).